Consider the following 696-residue polypeptide: Putative zinc metalloproteinase YIL108W (696 aa).

Lys-245 participates in a covalent cross-link: Glycyl lysine isopeptide (Lys-Gly) (interchain with G-Cter in ubiquitin). Residue His-318 participates in Zn(2+) binding. Glu-319 is a catalytic residue. His-322 and His-328 together coordinate Zn(2+). Ser-361 bears the Phosphoserine mark. Residues Lys-478, Lys-518, Lys-579, Lys-590, and Lys-596 each participate in a glycyl lysine isopeptide (Lys-Gly) (interchain with G-Cter in ubiquitin) cross-link. One can recognise a Jacalin-type lectin domain in the interval Gly-522–Ala-695.

It belongs to the peptidase M10B family. It depends on Zn(2+) as a cofactor.

The protein resides in the cytoplasm. The protein is Putative zinc metalloproteinase YIL108W of Saccharomyces cerevisiae (strain ATCC 204508 / S288c) (Baker's yeast).